Reading from the N-terminus, the 288-residue chain is Phosphatidylserine decarboxylase proenzyme (288 aa).

Catalysis depends on charge relay system; for autoendoproteolytic cleavage activity residues Asp101, His158, and Ser262. The active-site Schiff-base intermediate with substrate; via pyruvic acid; for decarboxylase activity is the Ser262. Ser262 bears the Pyruvic acid (Ser); by autocatalysis mark.

This sequence belongs to the phosphatidylserine decarboxylase family. PSD-B subfamily. Prokaryotic type I sub-subfamily. As to quaternary structure, heterodimer of a large membrane-associated beta subunit and a small pyruvoyl-containing alpha subunit. Requires pyruvate as cofactor. Is synthesized initially as an inactive proenzyme. Formation of the active enzyme involves a self-maturation process in which the active site pyruvoyl group is generated from an internal serine residue via an autocatalytic post-translational modification. Two non-identical subunits are generated from the proenzyme in this reaction, and the pyruvate is formed at the N-terminus of the alpha chain, which is derived from the carboxyl end of the proenzyme. The autoendoproteolytic cleavage occurs by a canonical serine protease mechanism, in which the side chain hydroxyl group of the serine supplies its oxygen atom to form the C-terminus of the beta chain, while the remainder of the serine residue undergoes an oxidative deamination to produce ammonia and the pyruvoyl prosthetic group on the alpha chain. During this reaction, the Ser that is part of the protease active site of the proenzyme becomes the pyruvoyl prosthetic group, which constitutes an essential element of the active site of the mature decarboxylase.

The protein localises to the cell membrane. The catalysed reaction is a 1,2-diacyl-sn-glycero-3-phospho-L-serine + H(+) = a 1,2-diacyl-sn-glycero-3-phosphoethanolamine + CO2. It participates in phospholipid metabolism; phosphatidylethanolamine biosynthesis; phosphatidylethanolamine from CDP-diacylglycerol: step 2/2. Catalyzes the formation of phosphatidylethanolamine (PtdEtn) from phosphatidylserine (PtdSer). In Alkalilimnicola ehrlichii (strain ATCC BAA-1101 / DSM 17681 / MLHE-1), this protein is Phosphatidylserine decarboxylase proenzyme.